We begin with the raw amino-acid sequence, 281 residues long: Oxidase pynE (281 aa).

Belongs to the avfA family.

It participates in secondary metabolite biosynthesis. Its function is as follows. Oxidase; part of the gene cluster that mediates the biosynthesis of pyranonigrins, a family of antioxidative compounds. The first step of pyranonigrins biosynthesis is performed by the hybrid PKS-NRPS synthetase that condenses 6 malonyl-CoA units to an acetyl starter unit, to form a 1,3,5-trioxotetradecane-6,8-dienyl-ACP. The enoyl reductase (ER) domain of pynA is likely to be functional during the first two rounds of polyketide chain extension, to generate the saturated C-C bonds of the alkyl side chain. PynA subsequently forms the amide bond between the acyl chain and L-serine. Although pynA has a terminal reductase domain, it appears to require the thioesterase pynI for the release of the straight-chain intermediate from pynA via the formation of a tetramic acid pyranonigrin J. The methyltransferase pynC then coverts pyranonigrin J to pyranonigrin I via N-methylation. The FAD-dependent monooxygenase pynG catalyzes an epoxidation-mediated cyclization to form the dihydro-gamma-pyrone moiety, followed by pynD-catalyzed oxidation of the alcohol to the ketone and enolization to yield the characteristic tetramic acid-fused gamma-pyrone core of pyranonigrin H. Pyranonigrin H is substrate of pynH for dehydration-mediated exo-methylene formation from the serine side chain to produce pyranonigrin E, before the oxidase pynE reduces the exo-methylene of pyranonigrin E into a pendant methyl to form pyranonigrin G. The FAD-linked oxidoreductase pynB performs the reverse reaction and converts pyranonigrin G back to pyranonigrin E. This is Oxidase pynE from Aspergillus niger (strain ATCC MYA-4892 / CBS 513.88 / FGSC A1513).